A 963-amino-acid chain; its full sequence is VPS35 endosomal protein-sorting factor-like (963 aa).

Disordered stretches follow at residues 38–71 (ITVTDSKSRRGGRKGSTSSSSSSSSSVAPDPLSS) and 85–111 (ASETPTLPHSVSAGELGRKRKEKEEEV). Low complexity predominate over residues 52-63 (GSTSSSSSSSSS).

The protein belongs to the VPS35L family. As to quaternary structure, component of the heterotrimeric retriever complex.

The protein resides in the endosome. Acts as a component of the retriever complex. The retriever complex is a heterotrimeric complex related to retromer cargo-selective complex (CSC) and essential for retromer-independent retrieval and recycling of numerous cargos such as integrins. The recruitment of the retriever complex to the endosomal membrane involves CCC and WASH complexes. In the endosomes, drives the retrieval and recycling of NxxY-motif-containing cargo proteins by coupling to SNX17, a cargo essential for the homeostatic maintenance of numerous cell surface proteins associated with processes that include cell migration, cell adhesion, nutrient supply and cell signaling. May be involved in copper-dependent atp7a trafficking between the trans-Golgi network and vesicles in the cell periphery. The chain is VPS35 endosomal protein-sorting factor-like (vps35l) from Danio rerio (Zebrafish).